The chain runs to 397 residues: MEKTMLEQKLENTILPLLLKKELINKIISEKIEDENIIRDIISETVKSYERTLVEPNESVGVVAAQSLGEPGTQMTMRTFHYAGVAELNVTLGLPRMIEIVDARKEPSTPTMTVYLTEDYAFDKSKAEEVAKNIESITVQNIAQDIHIDMVKLAINVVLNPESMKQRNITADDVMEAIKKKMKLKIEQEGNILRLIIKTPSLKALRKRIPKVKSIHLKGVPNIPRVIVKKDDTMGEYILHSEGSNLSAVFEIDGVDMVRTTSNNIVEIQDVLGIEAARNAIINEISGVLNQQGLNVDIRHLMVIADIMTADGSVKSIGRHGLSGEKASVLARAAFEETVKHLYSAAEKGHSDKLSGVVENIIVGKPISMGTGCVDVYIDRDYEEGKDLMITVEKEEN.

It belongs to the RNA polymerase beta' chain family. In terms of assembly, part of the RNA polymerase complex.

Its subcellular location is the cytoplasm. The enzyme catalyses RNA(n) + a ribonucleoside 5'-triphosphate = RNA(n+1) + diphosphate. Functionally, DNA-dependent RNA polymerase (RNAP) catalyzes the transcription of DNA into RNA using the four ribonucleoside triphosphates as substrates. Forms part of the jaw domain. This is DNA-directed RNA polymerase subunit Rpo1C from Methanococcus aeolicus (strain ATCC BAA-1280 / DSM 17508 / OCM 812 / Nankai-3).